A 247-amino-acid chain; its full sequence is 6-phosphogluconolactonase (247 aa).

This sequence belongs to the glucosamine/galactosamine-6-phosphate isomerase family. 6-phosphogluconolactonase subfamily.

It carries out the reaction 6-phospho-D-glucono-1,5-lactone + H2O = 6-phospho-D-gluconate + H(+). Its pathway is carbohydrate degradation; pentose phosphate pathway; D-ribulose 5-phosphate from D-glucose 6-phosphate (oxidative stage): step 2/3. Functionally, hydrolysis of 6-phosphogluconolactone to 6-phosphogluconate. The sequence is that of 6-phosphogluconolactonase (pgl) from Mycobacterium bovis (strain ATCC BAA-935 / AF2122/97).